We begin with the raw amino-acid sequence, 240 residues long: uncharacterized protein (240 aa).

Residues 216–240 (MKQSKNKPRIRQAVGATRQCRKPQA) are disordered.

This is an uncharacterized protein from Escherichia coli (strain K12).